Consider the following 124-residue polypeptide: Ribonuclease pancreatic (124 aa).

Residues 1 to 13 (KESAAAKFERQHI) are compositionally biased toward basic and acidic residues. The disordered stretch occupies residues 1 to 23 (KESAAAKFERQHIDSSTSSVSSS). Residues Lys-7 and Arg-10 each contribute to the substrate site. His-12 functions as the Proton acceptor in the catalytic mechanism. Disulfide bonds link Cys-26–Cys-84, Cys-40–Cys-95, Cys-58–Cys-110, and Cys-65–Cys-72. A glycan (N-linked (GlcNAc...) asparagine) is linked at Asn-34. Residues 41-45 (KPVNT), Lys-66, and Arg-85 each bind substrate. Residue His-119 is the Proton donor of the active site.

Belongs to the pancreatic ribonuclease family. Monomer. Interacts with and forms tight 1:1 complexes with RNH1. Dimerization of two such complexes may occur. Interaction with RNH1 inhibits this protein. In terms of tissue distribution, pancreas.

It localises to the secreted. The enzyme catalyses an [RNA] containing cytidine + H2O = an [RNA]-3'-cytidine-3'-phosphate + a 5'-hydroxy-ribonucleotide-3'-[RNA].. The catalysed reaction is an [RNA] containing uridine + H2O = an [RNA]-3'-uridine-3'-phosphate + a 5'-hydroxy-ribonucleotide-3'-[RNA].. Functionally, endonuclease that catalyzes the cleavage of RNA on the 3' side of pyrimidine nucleotides. Acts on single-stranded and double-stranded RNA. The polypeptide is Ribonuclease pancreatic (RNASE1) (Giraffa camelopardalis (Giraffe)).